The sequence spans 115 residues: MGTRLLCWAAICLLGADHTGAGVSQSLRHKVAKKGKDVALRYDPISGHNALYWYRQSLGQGLEFPIYFQGKDAADKSGLPRDRFSAQRSEGSISTLKFQRTQQGDLAVYLCASSS.

The first 21 residues, 1-21 (MGTRLLCWAAICLLGADHTGA), serve as a signal peptide directing secretion. The 94-residue stretch at 22–115 (GVSQSLRHKV…LAVYLCASSS (94 aa)) folds into the Ig-like domain.

In terms of assembly, most probably, the alpha-beta TR is not assembled due to incorrect folding of the beta chain. Alpha-beta TR is a heterodimer composed of an alpha and beta chain; disulfide-linked. The alpha-beta TR is associated with the transmembrane signaling CD3 coreceptor proteins to form the TR-CD3 (TcR or TCR). The assembly of alpha-beta TR heterodimers with CD3 occurs in the endoplasmic reticulum where a single alpha-beta TR heterodimer associates with one CD3D-CD3E heterodimer, one CD3G-CD3E heterodimer and one CD247 homodimer forming a stable octameric structure. CD3D-CD3E and CD3G-CD3E heterodimers preferentially associate with TR alpha and TR beta chains, respectively. The association of the CD247 homodimer is the last step of TcR assembly in the endoplasmic reticulum and is required for transport to the cell surface.

It is found in the cell membrane. Its function is as follows. Probable non-functional open reading frame (ORF) of V region of the variable domain of T cell receptor (TR) beta chain. Non-functional ORF generally cannot participate in the synthesis of a productive T cell receptor (TR) chain due to altered V-(D)-J or switch recombination and/or splicing site (at mRNA level) and/or conserved amino acid change (protein level). Alpha-beta T cell receptors are antigen specific receptors which are essential to the immune response and are present on the cell surface of T lymphocytes. Recognize peptide-major histocompatibility (MH) (pMH) complexes that are displayed by antigen presenting cells (APC), a prerequisite for efficient T cell adaptive immunity against pathogens. Binding of alpha-beta TR to pMH complex initiates TR-CD3 clustering on the cell surface and intracellular activation of LCK that phosphorylates the ITAM motifs of CD3G, CD3D, CD3E and CD247 enabling the recruitment of ZAP70. In turn ZAP70 phosphorylates LAT, which recruits numerous signaling molecules to form the LAT signalosome. The LAT signalosome propagates signal branching to three major signaling pathways, the calcium, the mitogen-activated protein kinase (MAPK) kinase and the nuclear factor NF-kappa-B (NF-kB) pathways, leading to the mobilization of transcription factors that are critical for gene expression and essential for T cell growth and differentiation. The T cell repertoire is generated in the thymus, by V-(D)-J rearrangement. This repertoire is then shaped by intrathymic selection events to generate a peripheral T cell pool of self-MH restricted, non-autoaggressive T cells. Post-thymic interaction of alpha-beta TR with the pMH complexes shapes TR structural and functional avidity. The protein is Probable non-functional T cell receptor beta variable 7-1 of Homo sapiens (Human).